We begin with the raw amino-acid sequence, 226 residues long: Biosynthetic peptidoglycan transglycosylase (226 aa).

Residues 10-30 (IIMTLLALLILPYLLIPVYAL) form a helical membrane-spanning segment.

It belongs to the glycosyltransferase 51 family.

Its subcellular location is the cell inner membrane. The enzyme catalyses [GlcNAc-(1-&gt;4)-Mur2Ac(oyl-L-Ala-gamma-D-Glu-L-Lys-D-Ala-D-Ala)](n)-di-trans,octa-cis-undecaprenyl diphosphate + beta-D-GlcNAc-(1-&gt;4)-Mur2Ac(oyl-L-Ala-gamma-D-Glu-L-Lys-D-Ala-D-Ala)-di-trans,octa-cis-undecaprenyl diphosphate = [GlcNAc-(1-&gt;4)-Mur2Ac(oyl-L-Ala-gamma-D-Glu-L-Lys-D-Ala-D-Ala)](n+1)-di-trans,octa-cis-undecaprenyl diphosphate + di-trans,octa-cis-undecaprenyl diphosphate + H(+). It participates in cell wall biogenesis; peptidoglycan biosynthesis. In terms of biological role, peptidoglycan polymerase that catalyzes glycan chain elongation from lipid-linked precursors. This Agrobacterium fabrum (strain C58 / ATCC 33970) (Agrobacterium tumefaciens (strain C58)) protein is Biosynthetic peptidoglycan transglycosylase.